Reading from the N-terminus, the 557-residue chain is Aerobic glycerol-3-phosphate dehydrogenase (557 aa).

An FAD-binding site is contributed by 21-49 (DLVIIGGGITGAGIALDASERGMKVALVE).

This sequence belongs to the FAD-dependent glycerol-3-phosphate dehydrogenase family. It depends on FAD as a cofactor.

It localises to the cytoplasm. The enzyme catalyses a quinone + sn-glycerol 3-phosphate = dihydroxyacetone phosphate + a quinol. The protein operates within polyol metabolism; glycerol degradation via glycerol kinase pathway; glycerone phosphate from sn-glycerol 3-phosphate (aerobic route): step 1/1. The polypeptide is Aerobic glycerol-3-phosphate dehydrogenase (glpD) (Staphylococcus aureus (strain USA300)).